The sequence spans 753 residues: LON peptidase N-terminal domain and RING finger protein 3 (753 aa).

The segment at Gly17 to Glu57 is disordered. A TPR 1 repeat occupies Cys72 to Val105. Residues Cys159 to Gly197 form an RING-type 1 zinc finger. TPR repeat units follow at residues Ala244–Asp277, Leu279–Gly311, and Lys313–Asn345. The segment at Glu351–Pro450 is disordered. Low complexity predominate over residues Ser363 to Gln382. Residues Ser386–Lys413 are compositionally biased toward basic and acidic residues. The RING-type 2 zinc finger occupies Cys461–Lys499. In terms of domain architecture, Lon N-terminal spans Met540 to Ser749.

In Mus musculus (Mouse), this protein is LON peptidase N-terminal domain and RING finger protein 3 (Lonrf3).